Reading from the N-terminus, the 401-residue chain is Bifunctional D-cysteine desulfhydrase/1-aminocyclopropane-1-carboxylate deaminase, mitochondrial (401 aa).

Residues 1-37 (MRGRSLTLSRVKLELARRSMSATSVPSMADFLTKKPY) constitute a mitochondrion transit peptide. An N-acetylserine modification is found at arginine 2. Lysine 93 bears the N6-(pyridoxal phosphate)lysine mark. The Nucleophile role is filled by serine 120.

This sequence belongs to the ACC deaminase/D-cysteine desulfhydrase family. It depends on pyridoxal 5'-phosphate as a cofactor. As to expression, highly expressed in stems and cauline leaves, and at lower levels in roots, rosette leaves and flowers.

The protein localises to the mitochondrion. It catalyses the reaction D-cysteine + H2O = hydrogen sulfide + pyruvate + NH4(+) + H(+). The catalysed reaction is 1-aminocyclopropane-1-carboxylate + H2O = 2-oxobutanoate + NH4(+). Catalyzes the production of hydrogen sulfide (H2S) from cysteine. Is mainly responsible for the degradation of cysteine to generate H2S, a regulator of stomatal movement and closure. Has high affinity for D-cysteine. In terms of biological role, possesses 1-aminocyclopropane-1-carboxylic acid (ACC) deaminase activity. Acts as a regulator of ACC levels and causes changes in ethylene levels. This chain is Bifunctional D-cysteine desulfhydrase/1-aminocyclopropane-1-carboxylate deaminase, mitochondrial (DCD), found in Arabidopsis thaliana (Mouse-ear cress).